Reading from the N-terminus, the 664-residue chain is Transketolase 1 (664 aa).

H26 is a substrate binding site. Residues H66 and 114–116 (GPL) contribute to the thiamine diphosphate site. Position 155 (D155) interacts with Mg(2+). Residues G156 and N185 each contribute to the thiamine diphosphate site. Positions 185 and 187 each coordinate Mg(2+). Positions 260, 357, and 384 each coordinate substrate. H260 contacts thiamine diphosphate. E411 functions as the Proton donor in the catalytic mechanism. Residue F437 participates in thiamine diphosphate binding. Substrate is bound by residues H461, D469, and R520.

It belongs to the transketolase family. As to quaternary structure, homodimer. The cofactor is Mg(2+). Ca(2+) serves as cofactor. Mn(2+) is required as a cofactor. Requires Co(2+) as cofactor. It depends on thiamine diphosphate as a cofactor.

It carries out the reaction D-sedoheptulose 7-phosphate + D-glyceraldehyde 3-phosphate = aldehydo-D-ribose 5-phosphate + D-xylulose 5-phosphate. Functionally, catalyzes the transfer of a two-carbon ketol group from a ketose donor to an aldose acceptor, via a covalent intermediate with the cofactor thiamine pyrophosphate. This Vibrio vulnificus (strain CMCP6) protein is Transketolase 1 (tkt1).